Reading from the N-terminus, the 1135-residue chain is Exportin-6-A (1135 aa).

One can recognise an Importin N-terminal domain in the interval 31–97 (IESLLNNFAQ…RNSLPKLLLS (67 aa)).

The protein belongs to the exportin family. Expressed during meiotic maturation 2 hours after germinal vesicle break down (GVBD) and in unfertilized and fertilized eggs, but not in oocytes (at protein level). Expressed in somatic cells, in oocytes, during meiotic maturation and in unfertilized and fertilized eggs.

The protein localises to the nucleus. It localises to the cytoplasm. In terms of biological role, mediates the nuclear export of actin and profilin-actin complexes in somatic cells. Oocyte nuclei lack active actin export. The sequence is that of Exportin-6-A (xpo6-a) from Xenopus laevis (African clawed frog).